Here is a 136-residue protein sequence, read N- to C-terminus: Small ribosomal subunit protein uS11c (136 aa).

Belongs to the universal ribosomal protein uS11 family. Part of the 30S ribosomal subunit.

The protein resides in the plastid. Its subcellular location is the chloroplast. The chain is Small ribosomal subunit protein uS11c from Helianthus annuus (Common sunflower).